The sequence spans 500 residues: NAD(P)H-quinone oxidoreductase chain 4, chloroplastic (500 aa).

The next 14 membrane-spanning stretches (helical) occupy residues 4–24 (FPWL…MLFL), 35–55 (YTIC…CYNF), 87–107 (IGTI…AFPV), 113–130 (LFHF…GSFS), 134–154 (LLLF…LLSM), 167–187 (FILY…GISL), 211–231 (ILFY…IPLH), 242–262 (HYST…YGLV), 272–292 (AHSM…IYAA), 305–325 (IAYS…SITD), 330–350 (GAIL…FLAG), 386–406 (LALP…GIIT), 416–436 (ILII…LLSM), and 462–482 (LFLS…PDFV).

It belongs to the complex I subunit 4 family.

The protein localises to the plastid. It is found in the chloroplast thylakoid membrane. The enzyme catalyses a plastoquinone + NADH + (n+1) H(+)(in) = a plastoquinol + NAD(+) + n H(+)(out). The catalysed reaction is a plastoquinone + NADPH + (n+1) H(+)(in) = a plastoquinol + NADP(+) + n H(+)(out). The sequence is that of NAD(P)H-quinone oxidoreductase chain 4, chloroplastic from Olimarabidopsis pumila (Dwarf rocket).